The chain runs to 84 residues: Kunitz-type serine protease inhibitor B6 (84 aa).

The N-terminal stretch at Met1 to Ser24 is a signal peptide. Residues Cys31–Cys81 enclose the BPTI/Kunitz inhibitor domain. Cystine bridges form between Cys31/Cys81, Cys40/Cys64, and Cys56/Cys77.

The protein belongs to the venom Kunitz-type family. Expressed by the venom gland.

The protein resides in the secreted. In terms of biological role, serine protease inhibitor that inhibits trypsin. In Daboia siamensis (Eastern Russel's viper), this protein is Kunitz-type serine protease inhibitor B6.